The primary structure comprises 416 residues: Creatine kinase U-type, mitochondrial (416 aa).

A mitochondrion-targeting transit peptide spans 1-39; sequence MAGPFSRLLSARPGLRLLALAGAGSLAAGFLLRPEPIRA. The cardiolipin-binding stretch occupies residues 40–63; the sequence is ASERRRQYPPSAEYPDLRKHNNCM. The region spanning 44–131 is the Phosphagen kinase N-terminal domain; that stretch reads RRQYPPSAEY…FDPVIQERHN (88 aa). S151 is subject to Phosphoserine. Residues 158–400 form the Phosphagen kinase C-terminal domain; sequence YVLSSRVRTG…NYLIDCERRL (243 aa). 161–165 lines the ATP pocket; that stretch reads SSRVR. At S196 the chain carries Phosphoserine. Position 213 is a phosphothreonine (T213). H224 serves as a coordination point for ATP. At S232 the chain carries Phosphoserine. Residues R269, R325, and 353–358 each bind ATP; that span reads RGTGGV. T355 carries the post-translational modification Phosphothreonine. S365 carries the phosphoserine modification. ATP is bound at residue D368.

Belongs to the ATP:guanido phosphotransferase family. In terms of assembly, exists as an octamer composed of four MTCK homodimers.

It is found in the mitochondrion inner membrane. The catalysed reaction is creatine + ATP = N-phosphocreatine + ADP + H(+). In terms of biological role, reversibly catalyzes the transfer of phosphate between ATP and various phosphogens (e.g. creatine phosphate). Creatine kinase isoenzymes play a central role in energy transduction in tissues with large, fluctuating energy demands, such as skeletal muscle, heart, brain and spermatozoa. The chain is Creatine kinase U-type, mitochondrial (CKMT1) from Sus scrofa (Pig).